Here is a 638-residue protein sequence, read N- to C-terminus: Threonine--tRNA ligase (638 aa).

The region spanning 1–61 is the TGS domain; sequence MPLITLPDGN…DKDCSVKIFT (61 aa). Positions 243 to 535 are catalytic; that stretch reads DHRKLGKEMD…LIENYAGKFP (293 aa). Zn(2+)-binding residues include Cys335, His386, and His512.

The protein belongs to the class-II aminoacyl-tRNA synthetase family. Homodimer. Zn(2+) is required as a cofactor.

It localises to the cytoplasm. It carries out the reaction tRNA(Thr) + L-threonine + ATP = L-threonyl-tRNA(Thr) + AMP + diphosphate + H(+). Its function is as follows. Catalyzes the attachment of threonine to tRNA(Thr) in a two-step reaction: L-threonine is first activated by ATP to form Thr-AMP and then transferred to the acceptor end of tRNA(Thr). Also edits incorrectly charged L-seryl-tRNA(Thr). The sequence is that of Threonine--tRNA ligase from Pelagibacter ubique (strain HTCC1062).